The sequence spans 198 residues: uncharacterized protein (198 aa).

Helical transmembrane passes span 20–40 (VIVGVVLGLAGTGALIGGLWA), 70–90 (FFVAPCLMLGLLTVLAVTASV), 107–127 (LAIGLMICAATAAAVGALLVW), and 164–184 (VAATVLWPAGIAALVYAVLAA).

It to M.tuberculosis Rv1591.

It is found in the cell membrane. This is an uncharacterized protein from Mycobacterium leprae (strain TN).